The following is a 723-amino-acid chain: Choline transporter-like protein 4 (723 aa).

The Cytoplasmic segment spans residues 1-36 (MGKKKQEEEQNSSEYGAPAQYDPTFNGPIHKRSCTD). The chain crosses the membrane as a helical span at residues 37 to 57 (IICCVLFMLVITGYMVVGILA). Residues 58 to 245 (WLYGDPRHVL…RIFEDFAKTW (188 aa)) lie on the Extracellular side of the membrane. 4 N-linked (GlcNAc...) asparagine glycosylation sites follow: Asn-71, Asn-202, Asn-211, and Asn-219. A helical transmembrane segment spans residues 246-266 (QWIVAGLVIAMVVSVLFLLLL). Residues 267 to 269 (RFT) lie on the Cytoplasmic side of the membrane. The helical transmembrane segment at 270–290 (APVLIWILIFGVLAVGAFGIW) threads the bilayer. Over 291–325 (YCYNDYMSLASSNLTFSNVGFTTNVQVYLQVRDTW) the chain is Extracellular. N-linked (GlcNAc...) asparagine glycosylation occurs at Asn-303. A helical membrane pass occupies residues 326–346 (LAFLIILCIVEAVLILALIFL). Residues 347-374 (RTRILIAIALIQETSKALGHMMSTLLYP) are Cytoplasmic-facing. The chain crosses the membrane as a helical span at residues 375–395 (VVTFVLLLVCVSYWGITALYL). At 396–464 (ATSGAPIYKV…RNLFNLQIYN (69 aa)) the chain is on the extracellular side. 3 N-linked (GlcNAc...) asparagine glycosylation sites follow: Asn-409, Asn-421, and Asn-430. A helical transmembrane segment spans residues 465 to 485 (VVAFLWCVNFVIALGHCTLAG). Topologically, residues 486 to 516 (AFASYYWAFSKPADIPTFPLTQSFMRALRYH) are cytoplasmic. The helical transmembrane segment at 517-537 (VGSLAFGALILTLVQIVRIIL) threads the bilayer. At 538–578 (EYLDHKFKAAQNPCARFLMCCLKCCFWCLEKFIKFINRNAY) the chain is on the extracellular side. Residues 579 to 599 (IMIAIYGKNFCVSAKNAFFLL) traverse the membrane as a helical segment. Over 600-615 (MRNIVRVVVLDKVTDL) the chain is Cytoplasmic. A helical transmembrane segment spans residues 616-636 (LLFFGKLLVVGGIGVLAFFFF). Residues 637 to 655 (SGRIQLPGNTFQTAALNYY) are Extracellular-facing. Residues 656 to 676 (WMPIITVVFGAYLIAHGFFSV) form a helical membrane-spanning segment. The Cytoplasmic segment spans residues 677–723 (YNMGVDTLFLCFLEDLERNDGSAEKPYFMSKNLMKILNKKNKQPKTG).

The protein belongs to the CTL (choline transporter-like) family.

The protein resides in the membrane. It is found in the apical cell membrane. It catalyses the reaction choline(out) + n H(+)(in) = choline(in) + n H(+)(out). The enzyme catalyses thiamine diphosphate(out) = thiamine diphosphate(in). Its function is as follows. Choline transporter that seems to play a role in the choline-acetylcholine system and is required to the efferent innervation of hair cells in the olivocochlear bundle for the maintenance of physiological function of outer hair cells and the protection of hair cells from acoustic injury. Also described as a thiamine pyrophosphate transporter. This is Choline transporter-like protein 4 (slc44a4) from Danio rerio (Zebrafish).